Reading from the N-terminus, the 98-residue chain is Class II hydrophobin 5 (98 aa).

An N-terminal signal peptide occupies residues 1 to 17 (MQFSLALVTLLATAVSA). 4 cysteine pairs are disulfide-bonded: cysteine 30–cysteine 78, cysteine 39–cysteine 69, cysteine 40–cysteine 52, and cysteine 79–cysteine 90.

It belongs to the cerato-ulmin hydrophobin family.

It localises to the secreted. The protein localises to the cell wall. Aerial growth, conidiation, and dispersal of filamentous fungi in the environment rely upon a capability of their secreting small amphipathic proteins called hydrophobins (HPBs) with low sequence identity. Class I can self-assemble into an outermost layer of rodlet bundles on aerial cell surfaces, conferring cellular hydrophobicity that supports fungal growth, development and dispersal; whereas Class II form highly ordered films at water-air interfaces through intermolecular interactions but contribute nothing to the rodlet structure. Does not seem to be important for the ability to cause seedling disease. This is Class II hydrophobin 5 from Gibberella moniliformis (Maize ear and stalk rot fungus).